Here is a 382-residue protein sequence, read N- to C-terminus: Protein-arginine rhamnosyltransferase (382 aa).

Residues 17–20 (NFGD), tyrosine 187, glutamine 252, and 268–272 (RGEDS) contribute to the dTDP-beta-L-rhamnose site. The active-site Proton acceptor is the aspartate 20. Glutamate 270 is a catalytic residue.

The protein belongs to the glycosyltransferase 104 family.

It carries out the reaction dTDP-beta-L-rhamnose + L-arginyl-[protein] = N(omega)-(alpha-L-rhamnosyl)-L-arginyl-[protein] + dTDP + H(+). Protein-arginine rhamnosyltransferase that catalyzes the transfer of a single rhamnose to elongation factor P (EF-P) on 'Lys-32', a modification required for EF-P-dependent rescue of polyproline stalled ribosomes. This is Protein-arginine rhamnosyltransferase from Neisseria meningitidis.